A 490-amino-acid chain; its full sequence is MRLSDLAAALQLPAPETDPQTDTEVTGVTHNAAWVQPGSAFVAIRGAKFDGHSFMEQAQAAGAVAVLGEGLADGQTSPLPYLTVPNARAALADAAAALAGHPSRELKVVGVTGTDGKTTTSWLTRHLLRSAGLATGLLSTVGYELPDGELRHFPAHFTTPEAPQVQDTLREMVAAGAQATVLEASSHALSLDRVRGVDWDVAVWTHLSSEHLDFHGTLDNYFADKRKLVERARFAVLNVDDPWTAQLRGIAPGETTYSAENQHADWRAQDIEERHSGLHFRVVSPAGDFQAELPMIGRFNVANALAGMAAAHHLGATALQLQAGLASFRGVPGRMELVPGGATSPRVIVDFAHTPPSLEKALGTLRATTAGHLWVVIGSAGGPRDPYKRAPLGEVATRLADHAILTEEDCRDTPLQDILNEMERGAREEGRSNFVSIGDRREAIRYAVTHAQPGDTVLLAGKGPEDTLERATETLPWNEVAEARAVLAER.

113 to 119 (GTDGKTT) is a binding site for ATP. UDP-N-acetyl-alpha-D-muramoyl-L-alanyl-D-glutamate-binding positions include 158-159 (TT), Ser185, and Arg193. N6-carboxylysine is present on Lys225.

This sequence belongs to the MurCDEF family. MurE subfamily. Carboxylation is probably crucial for Mg(2+) binding and, consequently, for the gamma-phosphate positioning of ATP.

Its subcellular location is the cytoplasm. The protein operates within cell wall biogenesis; peptidoglycan biosynthesis. Its function is as follows. Catalyzes the addition of an amino acid to the nucleotide precursor UDP-N-acetylmuramoyl-L-alanyl-D-glutamate (UMAG) in the biosynthesis of bacterial cell-wall peptidoglycan. The sequence is that of UDP-N-acetylmuramyl-tripeptide synthetase from Deinococcus radiodurans (strain ATCC 13939 / DSM 20539 / JCM 16871 / CCUG 27074 / LMG 4051 / NBRC 15346 / NCIMB 9279 / VKM B-1422 / R1).